The chain runs to 242 residues: Small ribosomal subunit protein uS2 (242 aa).

Belongs to the universal ribosomal protein uS2 family.

The polypeptide is Small ribosomal subunit protein uS2 (Shewanella sediminis (strain HAW-EB3)).